Here is a 95-residue protein sequence, read N- to C-terminus: Small ribosomal subunit protein uS19 (95 aa).

The interval 73 to 95 is disordered; that stretch reads EFSPTRTYRGHGADKNAKGSKKK.

The protein belongs to the universal ribosomal protein uS19 family.

Protein S19 forms a complex with S13 that binds strongly to the 16S ribosomal RNA. The polypeptide is Small ribosomal subunit protein uS19 (Deinococcus geothermalis (strain DSM 11300 / CIP 105573 / AG-3a)).